A 625-amino-acid chain; its full sequence is Glyco-Gag protein (625 aa).

Over 1-66 (LGDVSEASGA…SVFRRNRAAR (66 aa)) the chain is Cytoplasmic. A helical membrane pass occupies residues 67–86 (LVCLSIVLSFVCSLLFWTAS). At 87 to 625 (KNMGQTVTTP…PQTSLLTLDD (539 aa)) the chain is on the extracellular side. Asn113 carries an N-linked (GlcNAc...) asparagine; by host glycan. Positions 195-305 (PSPTAPILPS…STTSRAFPLR (111 aa)) are disordered. N-linked (GlcNAc...) asparagine; by host glycosylation occurs at Asn479. Basic and acidic residues-rich tracts occupy residues 522–553 (ETPE…EKER) and 573–606 (RQDR…DCPK). Residues 522 to 625 (ETPEEREERV…PQTSLLTLDD (104 aa)) are disordered.

Post-translationally, glycosylated by host. Cleaved by host near the middle of the molecule, releasing the c-terminal half containing capsid and nucleoprotein domains op GAG.

Its subcellular location is the host cell membrane. Its function is as follows. Plays a role in viral particle release. Presumably acts by facilitating the fission of the virion bud at the cell surface. May prevent the antiviral activity of murine APOBEC3. This AKV murine leukemia virus (AKR (endogenous) murine leukemia virus) protein is Glyco-Gag protein.